The primary structure comprises 1529 residues: Slit homolog 2 protein (1529 aa).

The signal sequence occupies residues 1–30 (MRGVGWQMLSLSLGLVLAILNKVAPQACPA). In terms of domain architecture, LRRNT spans 31–55 (QCSCSGSTVDCHGLALRSVPRNIPR). LRR repeat units follow at residues 56–77 (NTER…DFAG), 80–101 (HLRV…AFQD), 104–125 (ELER…LFLG), 128–149 (KLYR…AFRG), 152–173 (DIKN…AFRA), and 176–197 (DLEV…SFNH). N-linked (GlcNAc...) asparagine glycosylation is present at asparagine 66. N-linked (GlcNAc...) asparagine glycosylation occurs at asparagine 186. The region spanning 209–259 (NNLYCDCHLAWLSDWLRQRPRVGLYTQCMGPSHLRGHNVAEVQKREFVCSG) is the LRRCT 1 domain. The region spanning 264–300 (MAPSCSVLHCPAACTCSNNIVDCRGKGLTEIPTNLPE) is the LRRNT 2 domain. Cysteines 277 and 286 form a disulfide. 5 LRR repeats span residues 301–322 (TITE…AFSP), 325–346 (KLRR…AFQG), 349–370 (SLNS…LFEG), 373–394 (SLQL…AFQD), and 397–418 (NLNL…TFSP). The LRRCT 2 domain occupies 430 to 480 (NPFICDCHLKWLADYLHTNPIETSGARCTSPRRLANKRIGQIKSKKFRCSA). Intrachain disulfides connect cysteine 434–cysteine 457, cysteine 436–cysteine 478, cysteine 506–cysteine 512, and cysteine 510–cysteine 519. The LRRNT 3 domain maps to 497-533 (SGDCFADLACPEKCRCEGTTVDCSNQKLNKIPEHIPQ). 5 LRR repeats span residues 534–555 (YTAE…GIFK), 559–580 (QLRK…AFEG), 583–604 (GVNE…MFKG), 607–628 (SLKT…SFIG), and 631–652 (SVRL…AFDT). Residue asparagine 564 is glycosylated (N-linked (GlcNAc...) asparagine). The N-linked (GlcNAc...) asparagine glycan is linked to asparagine 623. The 51-residue stretch at 664-714 (NPFNCNCYLAWLGEWLRKKRIVTGNPRCQKPYFLKEIPIQDVAIQDFTCDD) folds into the LRRCT 3 domain. Disulfide bonds link cysteine 668–cysteine 691, cysteine 670–cysteine 712, cysteine 727–cysteine 733, and cysteine 731–cysteine 740. The LRRNT 4 domain occupies 718–754 (DNSCSPLSRCPTECTCLDTVVRCSNKGLKVLPKGIPR). LRR repeat units lie at residues 755-777 (DVTE…SNYK), 778-799 (HLTL…SFSN), 802-823 (QLLT…TFDG), and 826-847 (SLRL…AFND). Residues asparagine 794 and asparagine 799 are each glycosylated (N-linked (GlcNAc...) asparagine). The LRRCT 4 domain occupies 859 to 909 (NPLYCDCNMQWLSDWVKSEYKEPGIARCAGPGEMADKLLLTTPSKKFTCQG). Disulfide bonds link cysteine 863-cysteine 886, cysteine 865-cysteine 907, cysteine 922-cysteine 933, cysteine 927-cysteine 943, cysteine 945-cysteine 954, cysteine 961-cysteine 972, cysteine 966-cysteine 984, cysteine 986-cysteine 995, cysteine 1002-cysteine 1013, cysteine 1007-cysteine 1022, cysteine 1024-cysteine 1033, cysteine 1040-cysteine 1053, cysteine 1047-cysteine 1062, cysteine 1064-cysteine 1073, cysteine 1080-cysteine 1091, cysteine 1085-cysteine 1100, cysteine 1102-cysteine 1111, cysteine 1125-cysteine 1136, cysteine 1130-cysteine 1145, and cysteine 1147-cysteine 1156. EGF-like domains are found at residues 918–955 (KCNP…QDCD) and 957–996 (PIHA…ENCE). Residues 998–1034 (NVDDCEDNDCENNSTCVDGINNYTCLCPPEYTGELCE) form the EGF-like 3; calcium-binding domain. Residues asparagine 1009, asparagine 1010, and asparagine 1019 are each glycosylated (N-linked (GlcNAc...) asparagine). Residues 1036 to 1074 (KLDFCAQDLNPCQHDSKCILTPKGFKCDCTPGYVGEHCD) form the EGF-like 4 domain. The EGF-like 5; calcium-binding domain occupies 1076–1112 (DFDDCQDNKCKNGAHCTDAVNGYTCICPEGYSGLFCE). The EGF-like 6 domain occupies 1121–1157 (RTSPCDNFDCQNGAQCIVRINEPICQCLPGYQGEKCE). The region spanning 1160–1333 (VSVNFINKES…PMQTGILPGC (174 aa)) is the Laminin G-like domain. Residues asparagine 1183, asparagine 1266, and asparagine 1300 are each glycosylated (N-linked (GlcNAc...) asparagine). Cystine bridges form between cysteine 1307–cysteine 1333, cysteine 1336–cysteine 1346, cysteine 1341–cysteine 1356, cysteine 1358–cysteine 1367, cysteine 1375–cysteine 1385, cysteine 1380–cysteine 1395, cysteine 1397–cysteine 1406, cysteine 1416–cysteine 1426, cysteine 1421–cysteine 1436, cysteine 1438–cysteine 1447, cysteine 1453–cysteine 1492, cysteine 1471–cysteine 1506, cysteine 1482–cysteine 1522, and cysteine 1486–cysteine 1524. Residues 1332-1368 (GCEPCHKKVCAHGTCQPSSQAGFTCECQEGWMGPLCD) enclose the EGF-like 7 domain. The 76-residue stretch at 1453 to 1528 (CRGERIRDYY…VVKCGCTRCV (76 aa)) folds into the CTCK domain.

As to quaternary structure, interacts with GREM1. Homodimer. Binds ROBO1 and ROBO2 with high affinity. In terms of tissue distribution, fetal lung and kidney, and adult spinal cord. Weak expression in adult adrenal gland, thyroid, trachea and other tissues examined.

The protein resides in the secreted. Its function is as follows. Thought to act as molecular guidance cue in cellular migration, and function appears to be mediated by interaction with roundabout homolog receptors. During neural development involved in axonal navigation at the ventral midline of the neural tube and projection of axons to different regions. SLIT1 and SLIT2 seem to be essential for midline guidance in the forebrain by acting as repulsive signal preventing inappropriate midline crossing by axons projecting from the olfactory bulb. In spinal cord development may play a role in guiding commissural axons once they reached the floor plate by modulating the response to netrin. In vitro, silences the attractive effect of NTN1 but not its growth-stimulatory effect and silencing requires the formation of a ROBO1-DCC complex. May be implicated in spinal cord midline post-crossing axon repulsion. In vitro, only commissural axons that crossed the midline responded to SLIT2. In the developing visual system appears to function as repellent for retinal ganglion axons by providing a repulsion that directs these axons along their appropriate paths prior to, and after passage through, the optic chiasm. In vitro, collapses and repels retinal ganglion cell growth cones. Seems to play a role in branching and arborization of CNS sensory axons, and in neuronal cell migration. In vitro, Slit homolog 2 protein N-product, but not Slit homolog 2 protein C-product, repels olfactory bulb (OB) but not dorsal root ganglia (DRG) axons, induces OB growth cones collapse and induces branching of DRG axons. Seems to be involved in regulating leukocyte migration. This chain is Slit homolog 2 protein (SLIT2), found in Homo sapiens (Human).